The following is a 596-amino-acid chain: Actin-histidine N-methyltransferase (596 aa).

Positions methionine 1–proline 22 are disordered. Residues glutamine 10–valine 20 are compositionally biased toward polar residues. S-adenosyl-L-methionine-binding positions include arginine 75, glutamate 104 to phenylalanine 106, arginine 254, aspartate 275 to histidine 279, and serine 325 to phenylalanine 327. Residues glutamate 94–glycine 314 form the SET domain. Positions glycine 551–leucine 596 are disordered. Acidic residues predominate over residues serine 571 to glutamate 584.

It belongs to the class V-like SAM-binding methyltransferase superfamily. SETD3 actin-histidine methyltransferase family. As to quaternary structure, interacts with MYOD1. Phosphorylated by GSK3B, which is required for recognition by the SCF(FBXW7) complex and subsequent degradation. In terms of processing, ubiquitinated by the SCF(FBXW7) complex following phosphorylation by GSK3B, leading to its degradation by the proteasome.

It is found in the cytoplasm. It localises to the nucleus. The catalysed reaction is L-histidyl-[protein] + S-adenosyl-L-methionine = N(tele)-methyl-L-histidyl-[protein] + S-adenosyl-L-homocysteine + H(+). In terms of biological role, protein-histidine N-methyltransferase that specifically mediates 3-methylhistidine (tele-methylhistidine) methylation of actin at 'His-73'. Histidine methylation of actin is required for smooth muscle contraction of the laboring uterus during delivery. Does not have protein-lysine N-methyltransferase activity and probably only catalyzes histidine methylation of actin. The sequence is that of Actin-histidine N-methyltransferase from Rattus norvegicus (Rat).